Consider the following 277-residue polypeptide: Indole-3-glycerol phosphate synthase (277 aa).

This sequence belongs to the TrpC family.

The catalysed reaction is 1-(2-carboxyphenylamino)-1-deoxy-D-ribulose 5-phosphate + H(+) = (1S,2R)-1-C-(indol-3-yl)glycerol 3-phosphate + CO2 + H2O. It participates in amino-acid biosynthesis; L-tryptophan biosynthesis; L-tryptophan from chorismate: step 4/5. This is Indole-3-glycerol phosphate synthase from Pseudomonas putida (strain W619).